The chain runs to 252 residues: 3-dehydroquinate dehydratase (252 aa).

Residues Ser-21, 46 to 48 (EWR), and Arg-82 each bind 3-dehydroquinate. His-143 acts as the Proton donor/acceptor in catalysis. The active-site Schiff-base intermediate with substrate is Lys-170. 3 residues coordinate 3-dehydroquinate: Arg-213, Ser-232, and Gln-236.

This sequence belongs to the type-I 3-dehydroquinase family. In terms of assembly, homodimer.

The enzyme catalyses 3-dehydroquinate = 3-dehydroshikimate + H2O. The protein operates within metabolic intermediate biosynthesis; chorismate biosynthesis; chorismate from D-erythrose 4-phosphate and phosphoenolpyruvate: step 3/7. In terms of biological role, involved in the third step of the chorismate pathway, which leads to the biosynthesis of aromatic amino acids. Catalyzes the cis-dehydration of 3-dehydroquinate (DHQ) and introduces the first double bond of the aromatic ring to yield 3-dehydroshikimate. The sequence is that of 3-dehydroquinate dehydratase from Salmonella dublin (strain CT_02021853).